A 146-amino-acid chain; its full sequence is Large ribosomal subunit protein uL15 (146 aa).

Residues 1 to 13 show a composition bias toward basic and acidic residues; the sequence is MKLHELKPSEGSR. The disordered stretch occupies residues 1 to 54; the sequence is MKLHELKPSEGSRKVRNRVGRGIGSGNGKTAGKGHKGQNARSGGGVRPGFEGGQ. Gly residues-rich tracts occupy residues 21–31 and 42–52; these read RGIGSGNGKTA and SGGGVRPGFEG.

This sequence belongs to the universal ribosomal protein uL15 family. In terms of assembly, part of the 50S ribosomal subunit.

Binds to the 23S rRNA. This is Large ribosomal subunit protein uL15 from Bacillus velezensis (strain DSM 23117 / BGSC 10A6 / LMG 26770 / FZB42) (Bacillus amyloliquefaciens subsp. plantarum).